Reading from the N-terminus, the 297-residue chain is tRNA pseudouridine synthase A (297 aa).

The active-site Nucleophile is the aspartate 57. Residue tyrosine 115 coordinates substrate.

It belongs to the tRNA pseudouridine synthase TruA family. As to quaternary structure, homodimer.

It catalyses the reaction uridine(38/39/40) in tRNA = pseudouridine(38/39/40) in tRNA. Functionally, formation of pseudouridine at positions 38, 39 and 40 in the anticodon stem and loop of transfer RNAs. The sequence is that of tRNA pseudouridine synthase A from Nitratidesulfovibrio vulgaris (strain ATCC 29579 / DSM 644 / CCUG 34227 / NCIMB 8303 / VKM B-1760 / Hildenborough) (Desulfovibrio vulgaris).